We begin with the raw amino-acid sequence, 169 residues long: Nascent polypeptide-associated complex subunit alpha (169 aa).

The region spanning 14-78 is the NAC-A/B domain; that stretch reads NKNEKKAREM…AKIDNFSQKL (65 aa). The segment at 85–128 is disordered; that stretch reads IQSVSKSPEEIQKDMQLAADQAGDESAKPAAAAEEDDEAPVDAG. The UBA domain maps to 130 to 169; it reads LSAEDIELVASQANVSKNKAIKALKEHNGDIVNAIMALSK.

This sequence belongs to the NAC-alpha family. In terms of assembly, part of the nascent polypeptide-associated complex (NAC), consisting of EGD2 and EGD1. NAC associates with ribosomes via EGD1.

The protein resides in the cytoplasm. It localises to the nucleus. Component of the nascent polypeptide-associated complex (NAC), a dynamic component of the ribosomal exit tunnel, protecting the emerging polypeptides from interaction with other cytoplasmic proteins to ensure appropriate nascent protein targeting. The NAC complex also promotes mitochondrial protein import by enhancing productive ribosome interactions with the outer mitochondrial membrane and blocks the inappropriate interaction of ribosomes translating non-secretory nascent polypeptides with translocation sites in the membrane of the endoplasmic reticulum. EGD2 may also be involved in transcription regulation. This chain is Nascent polypeptide-associated complex subunit alpha (EGD2), found in Vanderwaltozyma polyspora (strain ATCC 22028 / DSM 70294 / BCRC 21397 / CBS 2163 / NBRC 10782 / NRRL Y-8283 / UCD 57-17) (Kluyveromyces polysporus).